Reading from the N-terminus, the 448-residue chain is Trigger factor (448 aa).

A PPIase FKBP-type domain is found at 172–257 (GDRVTVDFVG…MKKIEWPHLP (86 aa)).

Belongs to the FKBP-type PPIase family. Tig subfamily.

The protein localises to the cytoplasm. The enzyme catalyses [protein]-peptidylproline (omega=180) = [protein]-peptidylproline (omega=0). Involved in protein export. Acts as a chaperone by maintaining the newly synthesized protein in an open conformation. Functions as a peptidyl-prolyl cis-trans isomerase. This chain is Trigger factor, found in Burkholderia lata (strain ATCC 17760 / DSM 23089 / LMG 22485 / NCIMB 9086 / R18194 / 383).